The following is a 380-amino-acid chain: Deoxyguanosinetriphosphate triphosphohydrolase-like protein (380 aa).

The 118-residue stretch at 79–196 (RLTHTLEVQQ…VDAADALAYT (118 aa)) folds into the HD domain.

It belongs to the dGTPase family. Type 2 subfamily.

The protein is Deoxyguanosinetriphosphate triphosphohydrolase-like protein of Deinococcus deserti (strain DSM 17065 / CIP 109153 / LMG 22923 / VCD115).